Here is a 789-residue protein sequence, read N- to C-terminus: Glycerol-3-phosphate acyltransferase (789 aa).

The short motif at 276 to 281 is the HXXXXD motif element; sequence HRSYID.

The protein belongs to the GPAT/DAPAT family.

It is found in the cell membrane. The enzyme catalyses sn-glycerol 3-phosphate + an acyl-CoA = a 1-acyl-sn-glycero-3-phosphate + CoA. Its pathway is phospholipid metabolism; CDP-diacylglycerol biosynthesis; CDP-diacylglycerol from sn-glycerol 3-phosphate: step 1/3. In Mycobacterium tuberculosis (strain CDC 1551 / Oshkosh), this protein is Glycerol-3-phosphate acyltransferase (plsB).